We begin with the raw amino-acid sequence, 95 residues long: Large ribosomal subunit protein bL25 (95 aa).

The protein belongs to the bacterial ribosomal protein bL25 family. As to quaternary structure, part of the 50S ribosomal subunit; part of the 5S rRNA/L5/L18/L25 subcomplex. Contacts the 5S rRNA. Binds to the 5S rRNA independently of L5 and L18.

This is one of the proteins that binds to the 5S RNA in the ribosome where it forms part of the central protuberance. This chain is Large ribosomal subunit protein bL25, found in Haemophilus influenzae (strain PittGG).